Consider the following 522-residue polypeptide: MQNTDTTKYIIHSKINADGVIERPDIVGAIFGQTEGLLGADLDLRDLQKTGRIGRIEVMVTAKGGKTKGNIFVPSSLDKVETSILAASLETIDRVGPCSAKIEVFQVEDVRAVKRKKIIERAKLIFTKMFDETVPESQELADEVRQSVRVDELTYYGKSRIPCGPNVLNSDAIIILEGRADILNLLRYGIKNTICVGGTNIPPEVAELTKKKTVTAFTDGDRGGELIIRELLQVADIDYVARAPDGKCVEDLVQKEIIRALRRKVPVEQIIEKYGIQERENEDSACRLERVSKRKIRAPEIVPRIAEKKLHKRVKVHRVSPKADIHEEEFPEEMEETGPERAPEKIFEKVTERIPERPAEKTSAAAERVEARTSVAKPAVMARAVPATRVTRGKAAAEKGPAVKVPGGEAVRVSPAPARQAPAPVSPEAIRFRPHVDALKGTLTARILDSDDKVIEEIAVRDLASRLKNYRDNVKSVVFDGVITQRLVDIASSNEIKNLIGVKIGNIAKVPADMEVLTSSML.

In terms of domain architecture, Toprim spans 171–257; the sequence is DAIIILEGRA…CVEDLVQKEI (87 aa). 3 residues coordinate Mg(2+): Glu-177, Asp-219, and Asp-221.

Belongs to the archaeal DnaG primase family. As to quaternary structure, forms a ternary complex with MCM helicase and DNA. Component of the archaeal exosome complex. The cofactor is Mg(2+).

The catalysed reaction is ssDNA + n NTP = ssDNA/pppN(pN)n-1 hybrid + (n-1) diphosphate.. Functionally, RNA polymerase that catalyzes the synthesis of short RNA molecules used as primers for DNA polymerase during DNA replication. Also part of the exosome, which is a complex involved in RNA degradation. Acts as a poly(A)-binding protein that enhances the interaction between heteromeric, adenine-rich transcripts and the exosome. In Methanosarcina mazei (strain ATCC BAA-159 / DSM 3647 / Goe1 / Go1 / JCM 11833 / OCM 88) (Methanosarcina frisia), this protein is DNA primase DnaG.